Reading from the N-terminus, the 436-residue chain is UDP-N-acetylmuramate--L-alanine ligase (436 aa).

An ATP-binding site is contributed by 110–116 (GAHGKTS).

The protein belongs to the MurCDEF family.

The protein resides in the cytoplasm. It catalyses the reaction UDP-N-acetyl-alpha-D-muramate + L-alanine + ATP = UDP-N-acetyl-alpha-D-muramoyl-L-alanine + ADP + phosphate + H(+). It functions in the pathway cell wall biogenesis; peptidoglycan biosynthesis. In terms of biological role, cell wall formation. This chain is UDP-N-acetylmuramate--L-alanine ligase, found in Lacticaseibacillus casei (strain BL23) (Lactobacillus casei).